Consider the following 323-residue polypeptide: 2-methylene-furan-3-one reductase (323 aa).

NADP(+)-binding positions include lysine 59, 174 to 175 (GV), 197 to 200 (STKK), tyrosine 216, isoleucine 254, 265 to 267 (FVL), and 312 to 313 (RA). Residue lysine 59 coordinates substrate.

It belongs to the zinc-containing alcohol dehydrogenase family. Quinone oxidoreductase subfamily. As to quaternary structure, monomer. The N-terminus is blocked. In terms of tissue distribution, expressed in parenchyma tissues of red fruits. Not found in vascular tissues. Also detected in the achenes.

It catalyses the reaction 4-hydroxy-2,5-dimethyl-furan-3(2H)-one + NADP(+) = 4-hydroxy-5-methyl-2-methylenefuran-3(2H)-one + NADPH + H(+). Functionally, enone oxidoreductase involved in the biosynthesis of 4-hydroxy-2,5-dimethyl-3(2H)-furanone (HDMF or furaneol), the key flavor compound in strawberries. Can use both NADH and NADPH as the electron donor. This is 2-methylene-furan-3-one reductase (EO) from Fragaria ananassa (Strawberry).